Consider the following 590-residue polypeptide: RNA-binding protein 47 (590 aa).

Residues 1–21 are compositionally biased toward polar residues; that stretch reads MTAEDSTTAMNSDPTVGSSTK. The tract at residues 1–26 is disordered; it reads MTAEDSTTAMNSDPTVGSSTKVPEGV. 3 consecutive RRM domains span residues 71–149, 151–233, and 246–318; these read CEVF…CSVD, CRLF…WAEP, and KILY…LAKP. Asymmetric dimethylarginine; alternate occurs at positions 396 and 407. Residues Arg-396 and Arg-407 each carry the omega-N-methylarginine; alternate modification.

The protein belongs to the RRM RBM47 family. As to quaternary structure, homodimer. Interacts with A1CF. Interacts with APOBEC1; form an mRNA editing complex. Interacts with RBPMS.

The protein localises to the nucleus. Its subcellular location is the cytoplasm. Its function is as follows. Single-stranded RNA-binding protein that functions in a variety of RNA processes, including alternative splicing, RNA stabilization, and RNA editing. Functions as an enzyme-substrate adapter for the cytidine deaminase APOBEC1. With APOBEC1 forms an mRNA editing complex involved into cytidine to uridine editing of a variety of mRNA molecules. Through the binding of their 3'UTR, also stabilizes a variety of mRNAs and regulates the expression of genes such as the interferon alpha/beta receptor and interleukin-10. Also involved in the alternative splicing of several genes including TJP1. Binds the pre-mRNA (U)GCAUG consensus sequences in downstream intronic regions of alternative exons regulating their exclusion and inclusion into mRNAs. Independently of its RNA-binding activity, could negatively regulate MAVS by promoting its lysosomal degradation. The chain is RNA-binding protein 47 from Rattus norvegicus (Rat).